The primary structure comprises 156 residues: uncharacterized protein (156 aa).

5 helical membrane-spanning segments follow: residues 6–26 (LIVL…PYFA), 34–54 (FWKF…HQMP), 68–88 (CARC…YPFI), 100–120 (WYLI…LIGL), and 129–149 (FITG…IFFE).

The protein localises to the cell membrane. This is an uncharacterized protein from Methanocaldococcus jannaschii (strain ATCC 43067 / DSM 2661 / JAL-1 / JCM 10045 / NBRC 100440) (Methanococcus jannaschii).